Here is a 269-residue protein sequence, read N- to C-terminus: 4-hydroxy-tetrahydrodipicolinate reductase (269 aa).

Residues glycine 9–methionine 14 and glutamate 35 contribute to the NAD(+) site. An NADP(+)-binding site is contributed by arginine 36. NAD(+) is bound by residues glycine 98–threonine 100 and alanine 122–tyrosine 125. The active-site Proton donor/acceptor is histidine 155. Residue histidine 156 coordinates (S)-2,3,4,5-tetrahydrodipicolinate. Catalysis depends on lysine 159, which acts as the Proton donor. Residue glycine 165–threonine 166 participates in (S)-2,3,4,5-tetrahydrodipicolinate binding.

Belongs to the DapB family.

It is found in the cytoplasm. It catalyses the reaction (S)-2,3,4,5-tetrahydrodipicolinate + NAD(+) + H2O = (2S,4S)-4-hydroxy-2,3,4,5-tetrahydrodipicolinate + NADH + H(+). The enzyme catalyses (S)-2,3,4,5-tetrahydrodipicolinate + NADP(+) + H2O = (2S,4S)-4-hydroxy-2,3,4,5-tetrahydrodipicolinate + NADPH + H(+). It participates in amino-acid biosynthesis; L-lysine biosynthesis via DAP pathway; (S)-tetrahydrodipicolinate from L-aspartate: step 4/4. In terms of biological role, catalyzes the conversion of 4-hydroxy-tetrahydrodipicolinate (HTPA) to tetrahydrodipicolinate. The polypeptide is 4-hydroxy-tetrahydrodipicolinate reductase (Actinobacillus pleuropneumoniae serotype 3 (strain JL03)).